The chain runs to 326 residues: N-acetyl-gamma-glutamyl-phosphate reductase (326 aa).

Residue C155 is part of the active site.

Belongs to the NAGSA dehydrogenase family. Type 1 subfamily.

Its subcellular location is the cytoplasm. The catalysed reaction is N-acetyl-L-glutamate 5-semialdehyde + phosphate + NADP(+) = N-acetyl-L-glutamyl 5-phosphate + NADPH + H(+). The protein operates within amino-acid biosynthesis; L-arginine biosynthesis; N(2)-acetyl-L-ornithine from L-glutamate: step 3/4. Its function is as follows. Catalyzes the NADPH-dependent reduction of N-acetyl-5-glutamyl phosphate to yield N-acetyl-L-glutamate 5-semialdehyde. The polypeptide is N-acetyl-gamma-glutamyl-phosphate reductase (Shewanella sediminis (strain HAW-EB3)).